The chain runs to 152 residues: Probable flagellum biosynthesis repressor protein FlbT (152 aa).

This sequence belongs to the FlbT family.

Its function is as follows. Has a post-transcriptional repressor function in flagellum biogenesis. Associates with the 5'-UTR of fljK mRNA and promotes its degradation. The polypeptide is Probable flagellum biosynthesis repressor protein FlbT (Brucella anthropi (strain ATCC 49188 / DSM 6882 / CCUG 24695 / JCM 21032 / LMG 3331 / NBRC 15819 / NCTC 12168 / Alc 37) (Ochrobactrum anthropi)).